We begin with the raw amino-acid sequence, 104 residues long: Fusaric acid biosynthesis protein 2 (104 aa).

The protein belongs to the YciI family.

It functions in the pathway mycotoxin biosynthesis. Part of the gene cluster that mediates the biosynthesis of fusaric acid, a mycotoxin with low to moderate toxicity to animals and humans, but with high phytotoxic properties. L-aspartate is suggested as fusaric acid amino acid precursor that is activated and further processed to O-acetyl-L-homoserine by cluster enzymes aspartate kinase FUB3 and homoserine O-acetyltransferase FUB5, as well as enzymes of the primary metabolism. The polyketide synthase (PKS) FUB1 generates the triketide trans-2-hexenal which is presumptively released by the hydrolase FUB4 and linked to the NRPS-bound amino acid precursor by NAD(P)-dependent dehydrogenase FUB6. FUB1, FUB4, and the non-canonical NRPS Fub8 may form an enzyme complex. Further processing of the NRPS-bound intermediate might be carried out by FUB6 and the sulfhydrylase FUB7, enabling a spontaneous electrocyclization to close the carbon backbone of fusaric acid. Dihydrofusaric acid is likely to be released via reduction by the thioester reductase (TR) domain of FUB8 whereupon the final oxidation to fusaric acid may (also) be performed by the FMN-dependent dehydrogenase FUB9. This is Fusaric acid biosynthesis protein 2 from Gibberella fujikuroi (strain CBS 195.34 / IMI 58289 / NRRL A-6831) (Bakanae and foot rot disease fungus).